The primary structure comprises 1389 residues: MKKELTDLFKNSEVSEAQNFNSIKITLASPEKIKSWTYGEIKKPETINYRTFRPEKDGLFCARIFGPIKDYECLCGKYKRMKFRGIICEKCGVEVTKSNVRRERMGHINLATPVAHIWFLKSLPSRISLAVDMKLKEVERVLYFENFIVIEPGLTGLQKNQLLNEEELAKYQDEFGEESFEAGIGAEAILSILKSMDLELERKLLINTIKETKSKVNEERSIKRLKLIESFIETGQKPEWMILTVIPVIPPELRPLVPLDGGRFATSDLNDLYRRVINRNNRLKRLMDLKAPDIIVRNEKRMLQESVDALFDNGRRGRVITGTGKRPLKSLAEMLKGKQGRFRQNLLGKRVDYSGRSVIVVGPDLKLHECGLPKKMALELFKPFLYARLNKLGLASTIKQAKKLVEKETNAVWDALELIVREHPVLLNRAPTLHRLGVQAFEPKLIEGDAIELHPLCCAAFNADFDGDQMAVHVPLSLEAQLEARILMLSTNNILSPSNGKPIIVPSQDMILGLYYLSQAPFQTEKPDGYFINNDEIEHALSTGQIKVHSTIVSRFETLDEKGNKRVEKHTTTAGRFLLANLLPKHKDITFSMIDRLLPKKTVSEIIDSVFRFCGQKTTVIFCDHLKDLGFKHAFKAGISFGKDDLVIPANKGQLIEDTKKLIADYENQYSEGLITRGEKYNKVVDAWSKCTDKVAGEMMRGISATESTPDGMKINSVFMMADSGARGSAAQMKQLAGMRGLIAKPSGEIIETPIISNFKEGLTALEYFNSTHGARKGLADTALKTASSGYLTRRLCDVAQDLTISKIKCDNPGFIELAEILEGGNVVVSLSERALGRVTAFDVKNPITGEVVIKKETMIDEAGCDKIDAAGVKFIKAYSVMTCSSKLGVCATCYGRDLSRGKMVHVGEAIGMISAQSIGEPGTQLTMRTFHVGGTASVKQESQIVTKTAGTLKIINSNLLEDSKKNLIVMGRNTQLSIEDNNGVQVAVYKVAYGSKLFFQNGDKVKANEKICEWDPYTTPVIAEKSGIAGYVDLIDGVSIQETTDDATGISSKSVIDWRAQSKNTDLKPRITLRDDKGNVIKKADDNEARYYLVPDSILSVKDGQKIFAGDIIARLPKETTKTKDITGGLPRVAELFEARKAKDSAIIAENDGQVLFGKEVRGKQRISIQPDNGEPSNYLIPKGKHINFNQGEKIKKGEYLLDGQPLPHDILRILGIKDLTEYFVNQVQEVYRLQGVIINDKHIETILRQMLKKVEIKESGDSSYLPGEMIDRIKFDNTNEKLVAEGKNPASGERVLMGITKASLQTESFISAASFQETTRVLTDAAIKGKVDPLNGLKENVIVGRLVPAGTGHIKNKWNKNAIDADNKFLAEQEKIEPLETTETPAN.

Positions 73, 75, 88, and 91 each coordinate Zn(2+). Residues Asp464, Asp466, and Asp468 each coordinate Mg(2+). Cys810, Cys884, Cys891, and Cys894 together coordinate Zn(2+).

The protein belongs to the RNA polymerase beta' chain family. As to quaternary structure, the RNAP catalytic core consists of 2 alpha, 1 beta, 1 beta' and 1 omega subunit. When a sigma factor is associated with the core the holoenzyme is formed, which can initiate transcription. Requires Mg(2+) as cofactor. Zn(2+) is required as a cofactor.

The catalysed reaction is RNA(n) + a ribonucleoside 5'-triphosphate = RNA(n+1) + diphosphate. DNA-dependent RNA polymerase catalyzes the transcription of DNA into RNA using the four ribonucleoside triphosphates as substrates. The chain is DNA-directed RNA polymerase subunit beta' from Pelagibacter ubique (strain HTCC1062).